Consider the following 299-residue polypeptide: ATP synthase gamma chain (299 aa).

This sequence belongs to the ATPase gamma chain family. As to quaternary structure, F-type ATPases have 2 components, CF(1) - the catalytic core - and CF(0) - the membrane proton channel. CF(1) has five subunits: alpha(3), beta(3), gamma(1), delta(1), epsilon(1). CF(0) has three main subunits: a, b and c.

The protein resides in the cell membrane. Functionally, produces ATP from ADP in the presence of a proton gradient across the membrane. The gamma chain is believed to be important in regulating ATPase activity and the flow of protons through the CF(0) complex. This Levilactobacillus brevis (strain ATCC 367 / BCRC 12310 / CIP 105137 / JCM 1170 / LMG 11437 / NCIMB 947 / NCTC 947) (Lactobacillus brevis) protein is ATP synthase gamma chain.